We begin with the raw amino-acid sequence, 394 residues long: MSARNILVINCGSSSIKFALVNEAQEQFPLSGLAERLGSPEAILHWQQGDERDSLVIAGADHRLALSHLLPIVQRVAAGELHGIGHRVVHGGEYFSGASRLDAVSLQAIRQVAPLAPLHNPANLLGIEAAMKLFPTLTQVAVFDTAFHQSLPEHAYRYAVPEALYREHGVRRYGFHGTSHRYVSQKAAQMAGLPADASSWLVAHLGNGCSTCAVENGHSRDTSMGLTPLEGLVMGTRSGDVDPNLHSHLARTLGWSLEQIDSMLNKDSGLLGLSGLSNDMRSLEQAREQGHAGATLAIEVFCYRLAKSLAAMSCALRRLDGLIFTGGIGENSALIRSKTLEHLGLLGFALDPAANARCVRGVGGPIQAAHGPLVLVVPTNEERQIALDTLALLD.

Residue Asn10 participates in Mg(2+) binding. Residue Lys17 coordinates ATP. Arg87 contributes to the substrate binding site. Asp144 serves as the catalytic Proton donor/acceptor. ATP is bound by residues His204–Gly208, Asp279–Arg281, and Gly327–Asn331. Position 381 (Glu381) interacts with Mg(2+).

Belongs to the acetokinase family. Homodimer. The cofactor is Mg(2+). Mn(2+) is required as a cofactor.

It is found in the cytoplasm. The catalysed reaction is acetate + ATP = acetyl phosphate + ADP. The protein operates within metabolic intermediate biosynthesis; acetyl-CoA biosynthesis; acetyl-CoA from acetate: step 1/2. Catalyzes the formation of acetyl phosphate from acetate and ATP. Can also catalyze the reverse reaction. The chain is Acetate kinase from Ectopseudomonas mendocina (strain ymp) (Pseudomonas mendocina).